A 596-amino-acid polypeptide reads, in one-letter code: MFKLPTISLLLVSWSCLVALSQAKTYSLPDLTTDYNNAIPVDEEEAQDPFASCKIYCEGNLLHTIQTAVPKLFADSKTFVDMKLNNSPDKTLEDFNAMMEAKNQTPSSEDLKQFVDKYFSAPGTELEKWTPTDWKENPSFLDLISDPDLKQWGVELNSIWKDLGRKMKDEVSKNPEYYSIIPVPNPVIVPGGRFIEFYYWDSYWIIRGLLYSQMFDTARGMIENFFSIVNRFGFIPNGGRVYYHGRSQPPLLTGMVKSYVDFTNDDKFAIDALDTLEHEFEFFVNNHNVTVKNHSLCVYRDSSSGPRPESYREDVETGEEFPTDEAKELHYSELKAGAESGMDFSSRWFISPTGTNDGNRSALSTTSIVPVDLNAYLYWNAKLIAEFHSKAGNTKKVTEYETKAEKLLLGIQEVLWNEEAGVWLDYDMINQKPRDYYTPTNLSPLWVKAFNISESEKISASVMAYIERNKLDSFPGGVPNTLSYTGEQWDAPNVWAPMQYILVEGLNNLNTPEAKNMSLKWATRWVKTNFAAFSKDRHMYEKYNADEFGVGGGGGEYEVQTGFGWSNGVIIEWLSKHGRDISIGSGCGCLAGEKRQ.

Positions 1-23 (MFKLPTISLLLVSWSCLVALSQA) are cleaved as a signal peptide. Residues Arg-193, 200–201 (WD), Asn-237, and 246–248 (RSQ) contribute to the substrate site. 2 N-linked (GlcNAc...) asparagine glycosylation sites follow: Asn-288 and Asn-293. The segment at 303–323 (SSGPRPESYREDVETGEEFPT) is disordered. Residues 307 to 309 (RPE) and Gly-341 contribute to the substrate site. The active-site Proton donor/acceptor is the Asp-343. Residues Asn-359, Asn-451, and Asn-516 are each glycosylated (N-linked (GlcNAc...) asparagine). Glu-541 functions as the Proton donor/acceptor in the catalytic mechanism. Glu-556 provides a ligand contact to substrate.

Belongs to the glycosyl hydrolase 37 family. In terms of tissue distribution, in the adult brain predominantly expressed in glial cells (at protein level).

The catalysed reaction is alpha,alpha-trehalose + H2O = alpha-D-glucose + beta-D-glucose. In terms of biological role, enzyme that cleaves trehalose to produce 2 glucose molecules that can be used by the glycolytic pathway. Glycolysis is essential in glial cells but not in neurons; neurons rely on the citric acid cycle for their energy needs, and on lactate and alanine secreted into the hemolymph by glial cells to fuel it. In Drosophila melanogaster (Fruit fly), this protein is Trehalase.